We begin with the raw amino-acid sequence, 131 residues long: Small ribosomal subunit protein uS11 (131 aa).

It belongs to the universal ribosomal protein uS11 family. In terms of assembly, part of the 30S ribosomal subunit. Interacts with proteins S7 and S18. Binds to IF-3.

Its function is as follows. Located on the platform of the 30S subunit, it bridges several disparate RNA helices of the 16S rRNA. Forms part of the Shine-Dalgarno cleft in the 70S ribosome. This Saccharophagus degradans (strain 2-40 / ATCC 43961 / DSM 17024) protein is Small ribosomal subunit protein uS11.